We begin with the raw amino-acid sequence, 293 residues long: Iron-sulfur cluster transfer protein Nubpl (293 aa).

The tract at residues 214 to 217 is CXXC motif probably involved in coordinating iron-sulfur cluster binding; sequence CQNC.

This sequence belongs to the Mrp/NBP35 ATP-binding proteins family. As to quaternary structure, homodimer; dimerization is not reliant on iron-sulfur cluster binding. [4Fe-4S] cluster serves as cofactor.

Its subcellular location is the mitochondrion membrane. Functionally, iron-sulfur cluster transfer protein involved in the assembly of the mitochondrial membrane respiratory chain NADH dehydrogenase (Complex I). May deliver one or more Fe-S clusters to complex I subunits. Alleviates pausing in mitochondrial DNA (mtDNA) replication at slow zone 2. May be involved in mtDNA-helicase-mediated mtDNA unwinding and replication by transferring iron-sulfur clusters. The polypeptide is Iron-sulfur cluster transfer protein Nubpl (Drosophila melanogaster (Fruit fly)).